The following is a 414-amino-acid chain: Solute carrier family 25 member 46-B (414 aa).

Basic and acidic residues predominate over residues 1–13 (MQPRRPDRFDGLE). The disordered stretch occupies residues 1 to 89 (MQPRRPDRFD…AFGEENSGSS (89 aa)). Positions 29–50 (YQSSFPARSLSSSGDLSQQWVT) are enriched in polar residues. A Solcar 1 repeat occupies 92-183 (QVNRFAGFGI…GMLSEFTHLP (92 aa)). The next 6 membrane-spanning stretches (helical) occupy residues 99-119 (FGIGLASLFTENVLAHPCIVL), 159-179 (MGSTFIVQGISLGAEGMLSEF), 198-218 (HLLLKGLVYVIVTPFYSASLI), 254-274 (LLPLLVLTFPTVLHGILHYII), 310-330 (FPELLANFAASLCADVLLYPL), and 379-399 (LGFYKGFGAVVVQYTLHAIVL). The stretch at 307 to 412 (EDYFPELLAN…KIIYSSVVQT (106 aa)) is one Solcar 2 repeat.

This sequence belongs to the mitochondrial carrier (TC 2.A.29) family.

It is found in the mitochondrion outer membrane. May play a role in mitochondrial dynamics by controlling mitochondrial membrane fission. This Xenopus laevis (African clawed frog) protein is Solute carrier family 25 member 46-B (slc25a46-b).